The sequence spans 248 residues: 1,2-phenylacetyl-CoA epoxidase, subunit C (248 aa).

Residues 76 to 79 (QFSN) and 177 to 179 (IAL) each bind substrate.

In terms of assembly, forms a stable heterotetramer (dimer of heterodimers) with PaaA and a stable heterodimer with PaaB.

The protein operates within aromatic compound metabolism; phenylacetate degradation. Component of 1,2-phenylacetyl-CoA epoxidase multicomponent enzyme system which catalyzes the reduction of phenylacetyl-CoA (PA-CoA) to form 1,2-epoxyphenylacetyl-CoA. The subunit C may be essential for structural integrity of the alpha subunit. In Escherichia coli (strain K12), this protein is 1,2-phenylacetyl-CoA epoxidase, subunit C (paaC).